The following is a 372-amino-acid chain: Glutamate 5-kinase (372 aa).

K14 is a binding site for ATP. The substrate site is built by S54, D141, and N153. ATP contacts are provided by residues 173–174 (TD) and 215–221 (TGGMITK). The PUA domain occupies 280–358 (AGRLLLDDGA…REIEAALGYI (79 aa)).

The protein belongs to the glutamate 5-kinase family.

It localises to the cytoplasm. It catalyses the reaction L-glutamate + ATP = L-glutamyl 5-phosphate + ADP. It functions in the pathway amino-acid biosynthesis; L-proline biosynthesis; L-glutamate 5-semialdehyde from L-glutamate: step 1/2. Catalyzes the transfer of a phosphate group to glutamate to form L-glutamate 5-phosphate. This chain is Glutamate 5-kinase, found in Chromobacterium violaceum (strain ATCC 12472 / DSM 30191 / JCM 1249 / CCUG 213 / NBRC 12614 / NCIMB 9131 / NCTC 9757 / MK).